A 504-amino-acid chain; its full sequence is UDP-N-acetylmuramoylalanine--D-glutamate ligase (504 aa).

129-135 (GTNGKTT) is a binding site for ATP.

The protein belongs to the MurCDEF family.

It is found in the cytoplasm. It carries out the reaction UDP-N-acetyl-alpha-D-muramoyl-L-alanine + D-glutamate + ATP = UDP-N-acetyl-alpha-D-muramoyl-L-alanyl-D-glutamate + ADP + phosphate + H(+). Its pathway is cell wall biogenesis; peptidoglycan biosynthesis. Functionally, cell wall formation. Catalyzes the addition of glutamate to the nucleotide precursor UDP-N-acetylmuramoyl-L-alanine (UMA). The sequence is that of UDP-N-acetylmuramoylalanine--D-glutamate ligase from Burkholderia pseudomallei (strain 668).